The chain runs to 312 residues: Probable rRNA-processing protein EBP2 (312 aa).

Residues 1-32 form a disordered region; that stretch reads MLHHEDESSPESDSDFDASELTDKELQEAFSQ. The segment covering 8–20 has biased composition (acidic residues); it reads SSPESDSDFDASE. Residues 140-176 adopt a coiled-coil conformation; sequence EMAKTDQHMQKIRHKLQLKQASMEKSEKAKQLRALRK. The disordered stretch occupies residues 211-312; sequence LDFLEGDQTP…VRQKMKSKRR (102 aa). Positions 282–312 are enriched in basic residues; that stretch reads KGPHRPGKKGGKNANKRPGKNVRQKMKSKRR.

It belongs to the EBP2 family.

The protein localises to the nucleus. It is found in the nucleolus. In terms of biological role, required for the processing of the 27S pre-rRNA. The protein is Probable rRNA-processing protein EBP2 (ebna1bp2) of Xenopus laevis (African clawed frog).